A 689-amino-acid polypeptide reads, in one-letter code: Glycine--tRNA ligase beta subunit (689 aa).

It belongs to the class-II aminoacyl-tRNA synthetase family. In terms of assembly, tetramer of two alpha and two beta subunits.

It is found in the cytoplasm. The enzyme catalyses tRNA(Gly) + glycine + ATP = glycyl-tRNA(Gly) + AMP + diphosphate. This Shigella flexneri serotype 5b (strain 8401) protein is Glycine--tRNA ligase beta subunit.